We begin with the raw amino-acid sequence, 960 residues long: Glycine dehydrogenase (decarboxylating) (960 aa).

Position 709 is an N6-(pyridoxal phosphate)lysine (Lys-709).

This sequence belongs to the GcvP family. As to quaternary structure, the glycine cleavage system is composed of four proteins: P, T, L and H. Pyridoxal 5'-phosphate serves as cofactor.

The enzyme catalyses N(6)-[(R)-lipoyl]-L-lysyl-[glycine-cleavage complex H protein] + glycine + H(+) = N(6)-[(R)-S(8)-aminomethyldihydrolipoyl]-L-lysyl-[glycine-cleavage complex H protein] + CO2. Its function is as follows. The glycine cleavage system catalyzes the degradation of glycine. The P protein binds the alpha-amino group of glycine through its pyridoxal phosphate cofactor; CO(2) is released and the remaining methylamine moiety is then transferred to the lipoamide cofactor of the H protein. The sequence is that of Glycine dehydrogenase (decarboxylating) from Edwardsiella ictaluri (strain 93-146).